Reading from the N-terminus, the 509-residue chain is Maturase K (509 aa).

This sequence belongs to the intron maturase 2 family. MatK subfamily.

It localises to the plastid. The protein resides in the chloroplast. In terms of biological role, usually encoded in the trnK tRNA gene intron. Probably assists in splicing its own and other chloroplast group II introns. The chain is Maturase K from Metasequoia glyptostroboides (Dawn redwood).